The following is a 208-amino-acid chain: Large ribosomal subunit protein bL25 (208 aa).

Belongs to the bacterial ribosomal protein bL25 family. CTC subfamily. As to quaternary structure, part of the 50S ribosomal subunit; part of the 5S rRNA/L5/L18/L25 subcomplex. Contacts the 5S rRNA. Binds to the 5S rRNA independently of L5 and L18.

This is one of the proteins that binds to the 5S RNA in the ribosome where it forms part of the central protuberance. The sequence is that of Large ribosomal subunit protein bL25 from Bordetella pertussis (strain Tohama I / ATCC BAA-589 / NCTC 13251).